We begin with the raw amino-acid sequence, 403 residues long: Large ribosomal subunit protein uL3 (403 aa).

Positions 1–37 (MSHRKFSAPRHGSLGFLPRKRSSRHRGKVKSFPKDDP) are disordered. Ser13 is modified (phosphoserine). Residues 18–31 (PRKRSSRHRGKVKS) show a composition bias toward basic residues. A Glycyl lysine isopeptide (Lys-Gly) (interchain with G-Cter in SUMO2) cross-link involves residue Lys39. Lys136 carries the post-translational modification N6-acetyllysine. Glycyl lysine isopeptide (Lys-Gly) (interchain with G-Cter in SUMO2) cross-links involve residues Lys224 and Lys226. Position 245 is a tele-methylhistidine (His245). N6-acetyllysine; alternate occurs at positions 286 and 294. Lys286 is covalently cross-linked (Glycyl lysine isopeptide (Lys-Gly) (interchain with G-Cter in SUMO2); alternate). A Glycyl lysine isopeptide (Lys-Gly) (interchain with G-Cter in SUMO1); alternate cross-link involves residue Lys294. At Ser304 the chain carries Phosphoserine. Residue Lys366 is modified to N6-acetyllysine; alternate. Lys366 is covalently cross-linked (Glycyl lysine isopeptide (Lys-Gly) (interchain with G-Cter in SUMO2); alternate). N6-acetyllysine is present on Lys373. Residues Lys386, Lys393, and Lys399 each participate in a glycyl lysine isopeptide (Lys-Gly) (interchain with G-Cter in SUMO2) cross-link.

Belongs to the universal ribosomal protein uL3 family. Component of the large ribosomal subunit. Interacts with DHX33. Post-translationally, constitutively monomethylated at His-245 by METTL18. Methylation at His-245 regulates translation elongation by slowing ribosome traversal on tyrosine codons: slower elongation provides enough time for proper folding of synthesized proteins and prevents cellular aggregation of tyrosine-rich proteins It is not required for incorporation of RPL3 into ribosomes.

Its subcellular location is the nucleus. The protein resides in the nucleolus. It localises to the cytoplasm. In terms of biological role, component of the large ribosomal subunit. The ribosome is a large ribonucleoprotein complex responsible for the synthesis of proteins in the cell. This is Large ribosomal subunit protein uL3 (RPL3) from Macaca fascicularis (Crab-eating macaque).